The sequence spans 378 residues: Protein RecA (378 aa).

79-86 (GPESSGKT) is a binding site for ATP.

It belongs to the RecA family.

It is found in the cytoplasm. In terms of biological role, can catalyze the hydrolysis of ATP in the presence of single-stranded DNA, the ATP-dependent uptake of single-stranded DNA by duplex DNA, and the ATP-dependent hybridization of homologous single-stranded DNAs. It interacts with LexA causing its activation and leading to its autocatalytic cleavage. In Streptococcus pyogenes serotype M28 (strain MGAS6180), this protein is Protein RecA.